A 297-amino-acid polypeptide reads, in one-letter code: ER membrane protein complex subunit 2 (297 aa).

The residue at position 2 (Ala-2) is an N-acetylalanine. 3 TPR repeats span residues 87 to 120 (HRVKRLTGMRFEAMERYDDAIQLYDRILQEDPTN), 155 to 188 (QEAWHELAELYINEHDYAKAAFCLEELMMTNPYN), and 192 to 225 (CQQYAEVKYTQGGLENLELSRKYFAQALKLNNRN). Lys-255 is modified (N6-acetyllysine).

Belongs to the EMC2 family. As to quaternary structure, component of the ER membrane protein complex (EMC).

It is found in the endoplasmic reticulum membrane. Part of the endoplasmic reticulum membrane protein complex (EMC) that enables the energy-independent insertion into endoplasmic reticulum membranes of newly synthesized membrane proteins. Preferentially accommodates proteins with transmembrane domains that are weakly hydrophobic or contain destabilizing features such as charged and aromatic residues. Involved in the cotranslational insertion of multi-pass membrane proteins in which stop-transfer membrane-anchor sequences become ER membrane spanning helices. It is also required for the post-translational insertion of tail-anchored/TA proteins in endoplasmic reticulum membranes. By mediating the proper cotranslational insertion of N-terminal transmembrane domains in an N-exo topology, with translocated N-terminus in the lumen of the ER, controls the topology of multi-pass membrane proteins like the G protein-coupled receptors. By regulating the insertion of various proteins in membranes, it is indirectly involved in many cellular processes. This Bos taurus (Bovine) protein is ER membrane protein complex subunit 2.